The chain runs to 264 residues: Apolipoprotein A-I (264 aa).

Positions 1–18 (MRGVLVTLAVLFLTGTQA) are cleaved as a signal peptide. 2 tandem repeats follow at residues 67–88 (LKLA…EDMT) and 89–110 (PYYR…AELT). The tract at residues 67–264 (LKLADNLDTL…LLDEVQKTMA (198 aa)) is 10 X approximate tandem repeats. The stretch at 111–121 (KDLEEVKEKIR) is one 3; half-length repeat. Repeat copies occupy residues 122 to 143 (PFLD…QRLA), 144 to 165 (PVAQ…AKLT), 166 to 187 (PVAE…KNLA), 188 to 209 (PYSS…ERGI), and 210 to 231 (PQAS…EKMT). A 9; half-length repeat occupies 232-242 (PLVQEFKERLT). The stretch at 243–264 (PYAENLKNRLIDLLDEVQKTMA) is repeat 10.

Belongs to the apolipoprotein A1/A4/E family. Major protein of VLDL, HDL, LDL and in chylomicrons. Expressed in a number of tissues including liver, small intestine, lung, kidney, heart and muscle with highest expression in liver and small intestine.

The protein resides in the secreted. Participates in the reverse transport of cholesterol from tissues to the liver for excretion by promoting cholesterol efflux from tissues and by acting as a cofactor for the lecithin cholesterol acyltransferase (LCAT). The sequence is that of Apolipoprotein A-I (APOA1) from Coturnix japonica (Japanese quail).